The following is a 110-amino-acid chain: uncharacterized protein (110 aa).

3 helical membrane passes run 32 to 52, 57 to 77, and 90 to 110; these read VLNVVSIAILFETPHRLALVP, YTHMAIPLSTCLFCLCLCICI, and FLASFFVLILTINDLDVTFVI.

It localises to the membrane. May play a role in proper chromosome segregation. Suppresses the high-frequency loss of mini-chromosomes when overexpressed, and this suppression is completely dependent on silencing protein SIR4. This is an uncharacterized protein from Saccharomyces cerevisiae (strain ATCC 204508 / S288c) (Baker's yeast).